The following is a 358-amino-acid chain: Gap junction alpha-5 protein (358 aa).

The Cytoplasmic portion of the chain corresponds to 1 to 19 (MGDWSFLGEFLEEVHKHST). A helical transmembrane segment spans residues 20 to 40 (VIGKVWLTVLFIFRMLVLGTA). Over 41–76 (AESSWGDEQADFRCDTIQPGCQNVCYDQAFPISHIR) the chain is Extracellular. Residues 77 to 97 (YWVLQIIFVSTPSLVYMGHAM) traverse the membrane as a helical segment. Residues 98-164 (HTVRMQEKQK…CTILIRTTME (67 aa)) are Cytoplasmic-facing. The helical transmembrane segment at 165–185 (VAFIVGQYLLYGIFLDTLHVC) threads the bilayer. Over 186–205 (RRSPCPHPVNCYVSRPTEKN) the chain is Extracellular. The chain crosses the membrane as a helical span at residues 206 to 226 (VFIVFMMAVAGLSLFLSLAEL). The Cytoplasmic portion of the chain corresponds to 227-358 (YHLGWKKIRQ…SKARSDDLSV (132 aa)). Disordered stretches follow at residues 242–262 (RQGV…QSLT) and 318–358 (SQKP…DLSV). 2 positions are modified to phosphoserine: S353 and S357.

The protein belongs to the connexin family. Alpha-type (group II) subfamily. As to quaternary structure, a connexon is composed of a hexamer of connexins. As to expression, abundantly expressed in the lung, also expressed in the kidney and heart.

Its subcellular location is the cell membrane. It is found in the cell junction. The protein localises to the gap junction. One gap junction consists of a cluster of closely packed pairs of transmembrane channels, the connexons, through which materials of low MW diffuse from one cell to a neighboring cell. This chain is Gap junction alpha-5 protein (Gja5), found in Mus musculus (Mouse).